Reading from the N-terminus, the 5162-residue chain is Linear gramicidin synthase subunit B (5162 aa).

Carrier domains follow at residues 963–1038 (APRN…QALR), 2027–2101 (EPQS…VVLE), 3541–3616 (APRN…GAIG), and 4601–4675 (AATS…GQST). O-(pantetheine 4'-phosphoryl)serine occurs at positions 998, 2062, 3576, and 4636.

Belongs to the ATP-dependent AMP-binding enzyme family. Large multienzyme complex composed of 4 subunits; LgrA, LgrB, LgrC and LgrD. Requires pantetheine 4'-phosphate as cofactor.

Its function is as follows. Activates the 3rd to 6th amino acids (Ala, D-Leu, Ala and D-Val) in linear gramicidin and catalyzes the formation of the peptide bond between them. This enzyme is also responsible for the epimerization of the 4th (D-Leu) and the 6th (D-Val) amino acids. This Brevibacillus parabrevis protein is Linear gramicidin synthase subunit B (lgrB).